The primary structure comprises 434 residues: V-type ATP synthase beta chain (434 aa).

It belongs to the ATPase alpha/beta chains family.

In terms of biological role, produces ATP from ADP in the presence of a proton gradient across the membrane. The V-type beta chain is a regulatory subunit. The protein is V-type ATP synthase beta chain of Borreliella afzelii (strain PKo) (Borrelia afzelii).